Here is a 548-residue protein sequence, read N- to C-terminus: ComP-specific O-oligosaccharyltransferase (548 aa).

The next 12 membrane-spanning stretches (helical) occupy residues 8–28 (IKNYTIVSGVFFLGSAFIIPN), 32–52 (LSSTLYKELIAVLGLLILLTV), 68–88 (WFLFVIFIIFIQLIVGEIYFF), 91–111 (FFFSISFLVILFLSFLLGFNE), 119–139 (IVKKIAWIFIIVVQISFLIAI), 164–184 (LGQPNQFSTLILITLFLLCYL), 189–209 (SLNNMVFNILSFCLIFANVMT), 213–233 (SAWISVILISLLYLLKFQKKI), 239–259 (IFFNIVFWTLVYCVPLLFNLI), 331–351 (MLWNGFFIGLIISILILCFLI), 363–383 (LFLFFCVVAFFVHCLLEYPFA), and 418–438 (TLFLGCCWLGYVAFWVEVLDI).

The protein belongs to the PglL O-oligosaccharyltransferase family.

The protein resides in the cell membrane. Its function is as follows. Specifically catalyzes the glycosylation of the pilin-like competence factor ComP. This chain is ComP-specific O-oligosaccharyltransferase, found in Acinetobacter baylyi (strain ATCC 33305 / BD413 / ADP1).